A 277-amino-acid polypeptide reads, in one-letter code: C2H2-type zinc-finger transcription factor (277 aa).

Disordered regions lie at residues 23-66 and 78-146; these read PTMN…AHPP and MNEP…TDSI. The segment covering 27 to 37 has biased composition (polar residues); it reads EIETTDNTYPR. A C2H2-type; degenerate zinc finger spans residues 185–208; it reads HPCPDCGRVFTRSTARNFHRQSGT.

This sequence belongs to the GLI C2H2-type zinc-finger protein family.

Its subcellular location is the nucleus. Its function is as follows. C2H2-type zinc-finger transcription factor that controls the expression of the nonribosomal peptide synthases inpA and inpB, as well as of the other inp cluster-associated genes. Also mediates the expression of the asperfuranone biosynthesis gene cluster by binding to the afoA promoter. Probably recognizes the 5'-CT/C/AAAAGGAT/AT/GG/CA-3' motif in the promoters of teget genes. This Emericella nidulans (strain FGSC A4 / ATCC 38163 / CBS 112.46 / NRRL 194 / M139) (Aspergillus nidulans) protein is C2H2-type zinc-finger transcription factor.